We begin with the raw amino-acid sequence, 369 residues long: MELEFFKPPLYQQRYQFVKSYVDTYKPKKVADLGCSTCSLLHTLRFWDCIKVLVGLDIDEDVLSRKKFTLTPLPAHYLEPRNTSLTINLYQGSVTQKDPALLGFDLITCIELIEHLEAEELENFREVLFGFMAPITVIISTPNAEFNILFPKCTGFRHPDHKFEWNRREFQSWATEVAKCFNYTVEITGVGEPPRDSKNVGFCSQIAVFTRNYTESEESLQRKMECKSVYKTVLHIVYPSLQEEKYLRRAVQKVALFHAYQIKANFLQQFIHREEEEEPHNTDTEHRPCMDLKLTSRWPTLPQTEQDESMEPFLQEDTLYVPLKKIFSVPKVKELCGNMDNLRTMITGEATLSNDGNAILYHIDLENSC.

The S-adenosyl-L-methionine site is built by Ser39, Asp57, and Ser93. Mg(2+) contacts are provided by Glu111, Glu114, His115, and His161.

It belongs to the methyltransferase superfamily. HEN1 family. Mg(2+) serves as cofactor.

It is found in the cytoplasm. It catalyses the reaction small RNA 3'-end nucleotide + S-adenosyl-L-methionine = small RNA 3'-end 2'-O-methylnucleotide + S-adenosyl-L-homocysteine + H(+). Methyltransferase that adds a 2'-O-methyl group at the 3'-end of piRNAs, a class of 24 to 30 nucleotide RNAs that are generated by a Dicer-independent mechanism and are primarily derived from transposons and other repeated sequence elements. This probably protects the 3'-end of piRNAs from uridylation activity and subsequent degradation. Stabilization of piRNAs is essential for gametogenesis. This is Small RNA 2'-O-methyltransferase (henmt1) from Xenopus tropicalis (Western clawed frog).